Here is a 1254-residue protein sequence, read N- to C-terminus: Structural polyprotein (1254 aa).

The interval 1–33 (MFPFQPMYPMQPMPYRNPFAAPRRPWFPRTDPF) is necessary for nucleocapsid assembly and virus assembly. The tract at residues 33–68 (FLAMQVQELTRSMANLTFKQRRDAPPEGPSAKKPKK) is host transcription inhibition. The short motif at 41–48 (LTRSMANL) is the Supraphysiological nuclear export signal element. Residues 45-119 (MANLTFKQRR…KKPGKRQRMV (75 aa)) form a disordered region. The Nuclear localization signal signature appears at 64 to 68 (KKPKK). Residues 80 to 92 (GKKKKNQGKKKAK) show a composition bias toward basic residues. The segment at 91 to 127 (AKTGPPNPKAQNGNKKKTNKKPGKRQRMVMKLESDKT) is binding to the viral RNA. A phosphothreonine mark is found at T93 and T108. The segment covering 104 to 118 (NKKKTNKKPGKRQRM) has biased composition (basic residues). Positions 112 to 126 (PGKRQRMVMKLESDK) are ribosome-binding. Position 124 is a phosphoserine (S124). The Peptidase S3 domain occupies 126 to 275 (KTFPIMLEGK…KYTPENCEQW (150 aa)). Residue T127 is modified to Phosphothreonine. Catalysis depends on charge relay system residues H152, D174, and S226. The segment at 276-287 (SLVTTMCLLANV) is functions as an uncleaved signal peptide for the precursor of protein E3/E2. Topologically, residues 276–701 (SLVTTMCLLA…HYYHRYPMST (426 aa)) are extracellular. N-linked (GlcNAc...) asparagine; by host glycosylation is found at N286, N546, and N652. Residues 702–722 (ILGLSICAAIATVSVAASTWL) form a helical membrane-spanning segment. The Cytoplasmic portion of the chain corresponds to 723–757 (FCRSRVACLTPYRLTPNARIPFCLAVLCCARTARA). 3 S-palmitoyl cysteine; by host lipidation sites follow: C730, C750, and C751. Residues 758 to 772 (ETTWESLDHLWNNNQ) are Extracellular-facing. A helical transmembrane segment spans residues 773-793 (QMFWIQLLIPLAALIVVTRLL). Residues 794–795 (RC) are Cytoplasmic-facing. A helical membrane pass occupies residues 796-816 (VCCVVPFLVMAGAAAPAYEHA). At 817–1224 (TTMPSQAGIS…SKTAWTWLTS (408 aa)) the chain is on the extracellular side. Disulfide bonds link C861–C926, C874–C906, C875–C908, and C880–C890. An E1 fusion peptide loop region spans residues 896–913 (VYPFMWGGAYCFCDTENT). N-linked (GlcNAc...) asparagine; by host glycosylation is present at N946. 4 cysteine pairs are disulfide-bonded: C1071–C1083, C1113–C1188, C1118–C1192, and C1140–C1182. A helical transmembrane segment spans residues 1225-1245 (LLGGSAVIIIIGLVLATIVAM). At 1246–1254 (YVLTNQKHN) the chain is on the cytoplasmic side.

As to quaternary structure, homodimer. Homomultimer. Interacts with host karyopherin KPNA4; this interaction allows the nuclear import of the viral capsid protein. Interacts with spike glycoprotein E2. Interacts with host IRAK1; the interaction leads to inhibition of IRAK1-dependent signaling. Part of a tetrameric complex composed of host CRM1, host importin alpha/beta dimer and the viral capsid; this complex blocks the receptor-mediated transport through the nuclear pore. Interacts with host phosphatase PPP1CA; this interaction dephosphorylates the capsid protein, which increases its ability to bind to the viral genome. The precursor of protein E3/E2 and E1 form a heterodimer shortly after synthesis. In terms of assembly, interacts with spike glycoprotein E2. The precursor of protein E3/E2 and E1 form a heterodimer shortly after synthesis. Processing of the precursor of protein E3/E2 into E2 and E3 results in a heterodimer of the spike glycoproteins E2 and E1. Spike at virion surface are constituted of three E2-E1 heterodimers. After target cell attachment and endocytosis, E1 change conformation to form homotrimers. Interacts with 6K protein. Interacts (via fusion peptide loop) with host LDLRAD3 (via domain LDL-receptor class A 1); this interaction mediates viral entry to the host cell. 2 adjacent E2-E1 heterodimers in the trimeric spike interact with host LDLRAD3. As to quaternary structure, interacts with spike glycoprotein E1. Processing of the precursor of protein E3/E2 into E2 and E3 results in a heterodimer of the spike glycoproteins E2 and E1. Spike at virion surface are constituted of a trimer of E2-E1 heterodimers. Interacts with 6K protein. Interacts with host LDLRAD3 (via domain LDL-receptor class A 1); this interaction mediates viral entry to the host cell. 2 adjacent E2-E1 heterodimers in the trimeric spike interact with host LDLRAD3. Oligomer. Interacts with spike glycoprotein E1. Interacts with spike glycoprotein E2. Post-translationally, structural polyprotein: Specific enzymatic cleavages in vivo yield mature proteins. Capsid protein is auto-cleaved during polyprotein translation, unmasking a signal peptide at the N-terminus of the precursor of E3/E2. The remaining polyprotein is then targeted to the host endoplasmic reticulum, where host signal peptidase cleaves it into pE2, 6K and E1 proteins. pE2 is further processed to mature E3 and E2 by host furin in trans-Golgi vesicle. Phosphorylated on serine and threonine residues. In terms of processing, palmitoylated via thioester bonds. These palmitoylations may induce disruption of the C-terminus transmembrane. This would result in the reorientation of E2 C-terminus from lumenal to cytoplasmic side. Post-translationally, N-glycosylated. Palmitoylated via thioester bonds.

It is found in the virion. The protein resides in the host cytoplasm. Its subcellular location is the host cell membrane. The protein localises to the host nucleus. It localises to the virion membrane. The enzyme catalyses Autocatalytic release of the core protein from the N-terminus of the togavirus structural polyprotein by hydrolysis of a -Trp-|-Ser- bond.. Its function is as follows. Forms an icosahedral capsid with a T=4 symmetry composed of 240 copies of the capsid protein surrounded by a lipid membrane through which penetrate 80 spikes composed of trimers of E1-E2 heterodimers. The capsid protein binds to the viral RNA genome at a site adjacent to a ribosome binding site for viral genome translation following genome release. Possesses a protease activity that results in its autocatalytic cleavage from the nascent structural protein. Following its self-cleavage, the capsid protein transiently associates with ribosomes, and within several minutes the protein binds to viral RNA and rapidly assembles into icosahedric core particles. The resulting nucleocapsid eventually associates with the cytoplasmic domain of the spike glycoprotein E2 at the cell membrane, leading to budding and formation of mature virions. In case of infection, new virions attach to target cells and after clathrin-mediated endocytosis their membrane fuses with the host endosomal membrane. This leads to the release of the nucleocapsid into the cytoplasm, followed by an uncoating event necessary for the genomic RNA to become accessible. The uncoating might be triggered by the interaction of capsid proteins with ribosomes. Binding of ribosomes would release the genomic RNA since the same region is genomic RNA-binding and ribosome-binding. Specifically inhibits interleukin-1 receptor-associated kinase 1/IRAK1-dependent signaling during viral entry, representing a means by which the alphaviruses may evade innate immune detection and activation prior to viral gene expression. Inhibits host transcription. Forms a tetrameric complex with XPO1/CRM1 and the nuclear import receptor importin. This complex blocks the central channel of host nuclear pores thereby inhibiting the receptor-mediated nuclear transport and thus the host mRNA and rRNA transcription. The inhibition of transcription is linked to a cytopathic effect on the host cell. Functionally, provides the signal sequence for the translocation of the precursor of protein E3/E2 to the host endoplasmic reticulum. Furin-cleaved E3 remains associated with spike glycoprotein E1 and mediates pH protection of the latter during the transport via the secretory pathway. After virion release from the host cell, the assembly protein E3 is gradually released in the extracellular space. Plays a role in viral attachment to target host cell, by binding to the cell receptor LDLRAD3. Synthesized as a p62 precursor which is processed by furin at the cell membrane just before virion budding, giving rise to E2-E1 heterodimer. The p62-E1 heterodimer is stable, whereas E2-E1 is unstable and dissociate at low pH. p62 is processed at the last step, presumably to avoid E1 fusion activation before its final export to cell surface. E2 C-terminus contains a transitory transmembrane that would be disrupted by palmitoylation, resulting in reorientation of the C-terminal tail from lumenal to cytoplasmic side. This step is critical since E2 C-terminus is involved in budding by interacting with capsid proteins. This release of E2 C-terminus in cytoplasm occurs lately in protein export, and precludes premature assembly of particles at the endoplasmic reticulum membrane. In terms of biological role, acts as a viroporin that participates in virus glycoprotein processing and transport to the plasma membrane, cell permeabilization and budding of viral particles. Disrupts the calcium homeostasis of the cell, probably at the endoplasmic reticulum level. This leads to cytoplasmic calcium elevation. Because of its lipophilic properties, the 6K protein is postulated to influence the selection of lipids that interact with the transmembrane domains of the glycoproteins, which, in turn, affects the deformability of the bilayer required for the extreme curvature that occurs as budding proceeds. Present in low amount in virions, about 3% compared to viral glycoproteins. Its function is as follows. Class II viral fusion protein. Fusion activity is inactive as long as E1 is bound to E2 in mature virion. After virus attachment to cell receptor LDLRAD3 and endocytosis, acidification of the endosome induce dissociation of E1/E2 heterodimer and concomitant trimerization of the E1 subunits. This E1 trimer is fusion active, and promotes release of viral nucleocapsid in cytoplasm after endosome and viral membrane fusion. Efficient fusion requires the presence of cholesterol and sphingolipid in the target membrane. This is Structural polyprotein from Bos taurus (Bovine).